The following is a 460-amino-acid chain: Elongation factor 1-alpha (460 aa).

A N,N,N-trimethylglycine modification is found at Gly2. Position 3 is an N6,N6-dimethyllysine; alternate (Lys3). Lys3 carries the N6-methyllysine; alternate modification. The tr-type G domain maps to 6–241 (KTHINVVVIG…DAIEPPKRPT (236 aa)). Positions 15–22 (GHVDSGKS) are G1. Position 15 to 22 (15 to 22 (GHVDSGKS)) interacts with GTP. N6-methyllysine is present on Lys31. A G2 region spans residues 71 to 75 (GITID). Lys80 is subject to N6,N6,N6-trimethyllysine. Positions 92–95 (DAPG) are G3. GTP contacts are provided by residues 92–96 (DAPGH) and 154–157 (NKMD). Residues 154–157 (NKMD) form a G4 region. Residues 193–195 (SGF) are G5. Position 317 is an N6,N6-dimethyllysine; alternate (Lys317). At Lys317 the chain carries N6-methyllysine; alternate. At Lys391 the chain carries N6-methyllysine.

The protein belongs to the TRAFAC class translation factor GTPase superfamily. Classic translation factor GTPase family. EF-Tu/EF-1A subfamily.

It localises to the cytoplasm. In terms of biological role, this protein promotes the GTP-dependent binding of aminoacyl-tRNA to the A-site of ribosomes during protein biosynthesis. The sequence is that of Elongation factor 1-alpha (tef-1) from Neurospora crassa (strain ATCC 24698 / 74-OR23-1A / CBS 708.71 / DSM 1257 / FGSC 987).